A 471-amino-acid chain; its full sequence is 7-dehydrocholesterol reductase (471 aa).

A disordered region spans residues 1 to 23 (MASKSQHNAPKVKSPNGKAGSQG). S14 carries the post-translational modification Phosphoserine. Helical transmembrane passes span 36–56 (LASI…FIMA), 95–115 (LYAL…DFCH), 144–164 (LQAW…LSWF), 173–193 (WIPL…FAMI), 233–253 (LFFN…SFAA), 262–282 (VTNS…DFFW), 302–322 (LGWG…LYLV), and 327–347 (QLST…YYIF). Residues K354, R358, L391, W396, and 403 to 404 (NY) contribute to the NADP(+) site. Residues 416-436 (LACGGGHLLPYFYIIYMTILL) form a helical membrane-spanning segment. Residues D443, 447–451 (CANKY), and Y458 each bind NADP(+).

The protein belongs to the ERG4/ERG24 family. Interacts with DHCR24; this interaction regulates DHCR7 activity. Interacts with TMEM147.

The protein localises to the endoplasmic reticulum membrane. It catalyses the reaction cholesterol + NADP(+) = 7-dehydrocholesterol + NADPH + H(+). The catalysed reaction is 7-dehydrodesmosterol + NADPH + H(+) = desmosterol + NADP(+). The enzyme catalyses 5,6alpha-epoxy-5alpha-cholestan-3beta-ol + H2O = 5alpha-cholestane-3beta,5,6beta-triol. It carries out the reaction 5,6beta-epoxy-5beta-cholestan-3beta-ol + H2O = 5alpha-cholestane-3beta,5,6beta-triol. The protein operates within steroid biosynthesis; cholesterol biosynthesis. Its function is as follows. Oxidoreductase that catalyzes the last step of the cholesterol synthesis pathway, which transforms cholesta-5,7-dien-3beta-ol (7-dehydrocholesterol,7-DHC) into cholesterol by reducing the C7-C8 double bond of its sterol core. Can also metabolize cholesta-5,7,24-trien-3beta-ol (7-dehydrodemosterol, 7-DHD) to desmosterol, which is then metabolized by the Delta(24)-sterol reductase (DHCR24) to cholesterol. Modulates ferroptosis (a form of regulated cell death driven by iron-dependent lipid peroxidation) through the metabolic breakdown of the anti-ferroptotic metabolites 7-DHC and 7-DHD which, when accumulated, divert the propagation of peroxyl radical-mediated damage from phospholipid components to its sterol core, protecting plasma and mitochondrial membranes from phospholipid autoxidation. In terms of biological role, component of the microsomal antiestrogen binding site (AEBS), a multiproteic complex at the ER membrane that consists of an association between cholestenol Delta-isomerase/EBP and DHCR7. This complex is responsible for cholesterol-5,6-epoxide hydrolase (ChEH) activity, which consists in the hydration of cholesterol-5,6-epoxides (5,6-EC) into cholestane-3beta,5alpha,6beta-triol (CT). The precise role of each component of this complex has not been described yet. The polypeptide is 7-dehydrocholesterol reductase (Dhcr7) (Mus musculus (Mouse)).